The following is a 130-amino-acid chain: Large ribosomal subunit protein bL12 (130 aa).

The protein belongs to the bacterial ribosomal protein bL12 family. In terms of assembly, homodimer. Part of the ribosomal stalk of the 50S ribosomal subunit. Forms a multimeric L10(L12)X complex, where L10 forms an elongated spine to which 2 to 4 L12 dimers bind in a sequential fashion. Binds GTP-bound translation factors.

Its function is as follows. Forms part of the ribosomal stalk which helps the ribosome interact with GTP-bound translation factors. Is thus essential for accurate translation. The protein is Large ribosomal subunit protein bL12 of Mycobacterium bovis (strain ATCC BAA-935 / AF2122/97).